The following is a 343-amino-acid chain: Mas-related G-protein coupled receptor member F (343 aa).

Over 1–44 (MAGNCSWEAHSTNQNKMCPGMSEALELYSRGFLTIEQIATLPPP) the chain is Extracellular. Asn4 is a glycosylation site (N-linked (GlcNAc...) asparagine). The chain crosses the membrane as a helical span at residues 45–66 (AVTNYIFLLLCLCGLVGNGLVL). At 67–82 (WFFGFSIKRTPFSIYF) the chain is on the cytoplasmic side. A helical transmembrane segment spans residues 83-104 (LHLASADGIYLFSKAVIALLNM). Topologically, residues 105–123 (GTFLGSFPDYVRRVSRIVG) are extracellular. Residues 124 to 144 (LCTFFAGVSLLPAISIERCVS) form a helical membrane-spanning segment. Topologically, residues 145–160 (VIFPMWYWRRRPKRLS) are cytoplasmic. The helical transmembrane segment at 161-181 (AGVCALLWLLSFLVTSIHNYF) threads the bilayer. Over 182–198 (CMFLGHEASGTACLNMD) the chain is Extracellular. The chain crosses the membrane as a helical span at residues 199–220 (ISLGILLFFLFCPLMVLPCLAL). The Cytoplasmic portion of the chain corresponds to 221-241 (ILHVECRARRRQRSAKLNHVV). Residues 242–263 (LAIVSVFLVSSIYLGIDWFLFW) traverse the membrane as a helical segment. At 264 to 273 (VFQIPAPFPE) the chain is on the extracellular side. The helical transmembrane segment at 274–294 (YVTDLCICINSSAKPIVYFLA) threads the bilayer. The Cytoplasmic segment spans residues 295–343 (GRDKSQRLWEPLRVVFQRALRDGAEPGDAASSTPNTVTMEMQCPSGNAS). The disordered stretch occupies residues 318–343 (AEPGDAASSTPNTVTMEMQCPSGNAS). Polar residues predominate over residues 324–343 (ASSTPNTVTMEMQCPSGNAS).

It belongs to the G-protein coupled receptor 1 family. Mas subfamily. Gut, vas deferens, uterus and aorta; barely detectable in liver, kidney, lung, and salivary gland. In the brain, markedly abundant in the cerebellum.

It is found in the cell membrane. Orphan receptor. May bind to a neuropeptide and may regulate nociceptor function and/or development, including the sensation or modulation of pain. The polypeptide is Mas-related G-protein coupled receptor member F (Mrgprf) (Rattus norvegicus (Rat)).